Consider the following 150-residue polypeptide: Transcriptional repressor NrdR (150 aa).

A zinc finger lies at 3-34 (CPFCHHPQSRVIDSRTVENGFVTRRRRQCTKC). An ATP-cone domain is found at 46–136 (LLVEKRNGVT…VYKSFSSMED (91 aa)).

The protein belongs to the NrdR family. Zn(2+) is required as a cofactor.

Its function is as follows. Negatively regulates transcription of bacterial ribonucleotide reductase nrd genes and operons by binding to NrdR-boxes. This Corynebacterium kroppenstedtii (strain DSM 44385 / JCM 11950 / CIP 105744 / CCUG 35717) protein is Transcriptional repressor NrdR.